The chain runs to 101 residues: TrfB transcriptional repressor protein (101 aa).

Residues glutamine 37 to histidine 56 constitute a DNA-binding region (H-T-H motif).

Functionally, in conjunction with KorB, inhibits the transcription of kilA, trfA and korAB operons. In conjunction with KorC is responsible for the negative control of kilC and kilE operons. The chain is TrfB transcriptional repressor protein (trfB) from Escherichia coli.